A 695-amino-acid polypeptide reads, in one-letter code: Sodium-dependent phosphate transport protein 2B (695 aa).

A disordered region spans residues 1–44 (MAPWPELENAHPNPNKFIEGASGPQSSIPDKDKGTSKTNDSGTP). Residues 1–90 (MAPWPELENA…KWSERDSKGK (90 aa)) are Cytoplasmic-facing. Residues 91–111 (ILCIFQGIGKFILLLGFLYLF) form a helical membrane-spanning segment. Over 112–136 (VCSLDVLSSAFQLVGGKMAGQFFSN) the chain is Extracellular. A helical transmembrane segment spans residues 137–157 (NSIMSNPVAGLVIGVLVTVMV). At 158–213 (QSSSTSSSIIVSMVASSLLSVRAAIPIIMGANIGTSITNTIVALMQAGDRNEFRRA) the chain is on the cytoplasmic side. A helical membrane pass occupies residues 214 to 234 (FAGATVHDFFNWLSVLVLLPL). Topologically, residues 235–363 (EAATHYLEKL…FVNFSLPDLA (129 aa)) are extracellular. Residues asparagine 295, asparagine 313, asparagine 321, asparagine 340, and asparagine 356 are each glycosylated (N-linked (GlcNAc...) asparagine). A disulfide bridge connects residues cysteine 303 and cysteine 350. A helical transmembrane segment spans residues 364–384 (VGIILLTVSLLILCGCLIMIV). Topologically, residues 385–408 (KLLGSVLRGQVATVIKKTLNTDFP) are cytoplasmic. A helical transmembrane segment spans residues 409-429 (FPFAWLTGYLAILVGAGMTFI). Topologically, residues 430–486 (VQSSSVFTSAMTPLIGIGVISIERAYPLTLGSNIGTTTTAILAALASPGNTLRSSLQ) are extracellular. Residues 487-507 (IALCHFFFNISGILLWYPIPF) form a helical membrane-spanning segment. Residues 508 to 526 (TRLPIRLAKGLGNISAKYR) lie on the Cytoplasmic side of the membrane. Residues 527–547 (WFAVFYLIFFFLLTPLTVFGL) form a helical membrane-spanning segment. The Extracellular segment spans residues 548–551 (SLAG). A helical membrane pass occupies residues 552-572 (WPVLVGVGVPIILLILLVLCL). At 573–695 (RMLQARCPRI…MKALSNTTVF (123 aa)) the chain is on the cytoplasmic side.

The protein belongs to the SLC34A transporter family. As to expression, highly expressed in the lung, in type II alveolar cells. Moderately expressed in kidney followed by small intestine.

The protein resides in the apical cell membrane. The enzyme catalyses 3 Na(+)(out) + phosphate(out) = 3 Na(+)(in) + phosphate(in). Its function is as follows. Involved in actively transporting phosphate into cells via Na(+) cotransport. This is Sodium-dependent phosphate transport protein 2B (Slc34a2) from Rattus norvegicus (Rat).